The chain runs to 393 residues: MDNDHLTTLNLGPTHPATHGVFQNILKMDGERIVDAVPTVGYIHRAFEKIAERRAFYQITTLTDRMNYCSAPLNNMGWHMTVEKLAGIELPKRVEYMRVVIMELSRIADHLICNSILGVDAGAFTGFLYIMQSREQIYEIFEEICGARLTTNMGRIGGFERDFNDIAMRKIDKFLADYPAVLTEFENLFNRNRIFMDRTIGTGGITAERALNYGFTGPNLRAAGVDYDVRVTSPYSSYQDFDFTIPIGINGDTYDRFMVRNKEMWESLSIIRQAMEKIKALPKGVFHAEVPDFYLPPKEDVYSQMEALIYHFKIVMGETEIPKGEVYHSIEGANGELGYYLVSDGGRTPYRLHFRRPCFIYYQAYPEMIKGQLISDAVVTMSSLNLIAGEMDA.

The protein belongs to the complex I 49 kDa subunit family. In terms of assembly, NDH-1 is composed of 14 different subunits. Subunits NuoB, C, D, E, F, and G constitute the peripheral sector of the complex.

It localises to the cell inner membrane. It carries out the reaction a quinone + NADH + 5 H(+)(in) = a quinol + NAD(+) + 4 H(+)(out). NDH-1 shuttles electrons from NADH, via FMN and iron-sulfur (Fe-S) centers, to quinones in the respiratory chain. The immediate electron acceptor for the enzyme in this species is believed to be a menaquinone. Couples the redox reaction to proton translocation (for every two electrons transferred, four hydrogen ions are translocated across the cytoplasmic membrane), and thus conserves the redox energy in a proton gradient. The chain is NADH-quinone oxidoreductase subunit D 2 from Cytophaga hutchinsonii (strain ATCC 33406 / DSM 1761 / CIP 103989 / NBRC 15051 / NCIMB 9469 / D465).